The chain runs to 423 residues: Core protease OPG082 (423 aa).

Residues His241, Asp248, and Cys328 contribute to the active site.

It belongs to the peptidase C57 family.

The protein localises to the virion. Its function is as follows. Late protein responsible for processing most or all of the viral core and membrane proteins known to undergo morphogenesis-associated proteolysis. These proteolytic events are involved in the transformation of immature virions (IV) into mature virions (MV). Probably cleaves at least the OPG129, OPG136, OPG098, and OPG144 precursors preferentially at Ala-Gly-|-Ala motifs. Also seems to process Ala-Gly-|-Ser and Ala-Gly-|-Thr motifs. The sequence is that of Core protease OPG082 (OPG083) from Homo sapiens (Human).